The primary structure comprises 373 residues: Glycerol-3-phosphate dehydrogenase [NAD(+)] 2 (373 aa).

Phosphoserine is present on Ser15. Residues 31–36 (GSGNWG), Phe123, Lys146, and Ala179 each bind NAD(+). Lys146 lines the substrate pocket. Residue Lys236 is the Proton acceptor of the active site. Residues Arg300 and Gln329 each contribute to the NAD(+) site. 300–301 (RN) is a substrate binding site.

It belongs to the NAD-dependent glycerol-3-phosphate dehydrogenase family.

Its subcellular location is the cytoplasm. The enzyme catalyses sn-glycerol 3-phosphate + NAD(+) = dihydroxyacetone phosphate + NADH + H(+). The chain is Glycerol-3-phosphate dehydrogenase [NAD(+)] 2 (gpd2) from Schizosaccharomyces pombe (strain 972 / ATCC 24843) (Fission yeast).